Consider the following 491-residue polypeptide: MQDSSSALESYSDVTLIGAGIMSGTLGAFLTELAPEKSLAIFEKLSAVGLESSNEWNNAGTGHSALCELNYTEQKANGEVSVERAVKICEDFQLSLQLWSYLVETGRIQAPREFIHRIPHISFVQGEQNAQFLQKRYQSLAQSHLFEGMQFSRDHQQLAQWMPLMMQNRDSNETLAASYIQYGTDVNFGELTRKLFDYLVKQKAELNLNHTVKNIQRLANGEWKLTVVDQQGQKRVHRSKFVFIGGGGGALPLLQKSGITDGKNVGGFPVSGLFMVCNNPEVIAKHNAKVYGKAKLGAPPMSVPHLDTRFIEGKQSLLFGPFAGFTLKFLKQGSVLDLPTSVTPTNFCSVTKAGIKNLPLAHYLMKQAMLTKAQRMADLREFVPDAKDEDWDVVVAGQRVQVIKGGEMRFGTEVIRAEDGSLAALLGASPGASTSVKAMLDVLVSCFAAELPQWQAKLTQMLPSYGKALRNEPQLYAQIKQRVDQVLALAN.

It belongs to the MQO family. The cofactor is FAD.

The catalysed reaction is (S)-malate + a quinone = a quinol + oxaloacetate. Its pathway is carbohydrate metabolism; tricarboxylic acid cycle; oxaloacetate from (S)-malate (quinone route): step 1/1. This Actinobacillus pleuropneumoniae serotype 5b (strain L20) protein is Probable malate:quinone oxidoreductase.